The primary structure comprises 51 residues: Sperm protamine P1 (51 aa).

It belongs to the protamine P1 family. In terms of tissue distribution, testis.

The protein localises to the nucleus. It is found in the chromosome. In terms of biological role, protamines substitute for histones in the chromatin of sperm during the haploid phase of spermatogenesis. They compact sperm DNA into a highly condensed, stable and inactive complex. The protein is Sperm protamine P1 (PRM1) of Trachypithecus johnii (Nilgiri langur).